The chain runs to 133 residues: Ribosome-binding factor A (133 aa).

Belongs to the RbfA family. In terms of assembly, monomer. Binds 30S ribosomal subunits, but not 50S ribosomal subunits or 70S ribosomes.

The protein resides in the cytoplasm. One of several proteins that assist in the late maturation steps of the functional core of the 30S ribosomal subunit. Associates with free 30S ribosomal subunits (but not with 30S subunits that are part of 70S ribosomes or polysomes). Required for efficient processing of 16S rRNA. May interact with the 5'-terminal helix region of 16S rRNA. This chain is Ribosome-binding factor A, found in Chlamydia muridarum (strain MoPn / Nigg).